We begin with the raw amino-acid sequence, 266 residues long: PTS system sorbose-specific EIIC component (266 aa).

Residues 1 to 237 (MEISTLQIIA…GGVGVIIALI (237 aa)) form the PTS EIIC type-4 domain. The next 7 helical transmembrane spans lie at 3-23 (ISTL…MGSV), 33-53 (LIAC…VMLG), 79-99 (IISA…IAIA), 100-120 (LPVA…TVVF), 151-171 (VAIP…SSML), 183-203 (QIAG…MMGV), and 219-239 (YLDF…LIYI).

Its subcellular location is the cell inner membrane. Its function is as follows. The phosphoenolpyruvate-dependent sugar phosphotransferase system (PTS), a major carbohydrate active transport system, catalyzes the phosphorylation of incoming sugar substrates concomitant with their translocation across the cell membrane. The enzyme II SorABFM PTS system is involved in L-sorbose transport. In Klebsiella pneumoniae, this protein is PTS system sorbose-specific EIIC component.